A 406-amino-acid polypeptide reads, in one-letter code: 4-hydroxy-3-methylbut-2-en-1-yl diphosphate synthase (ferredoxin) (406 aa).

Residues C314, C317, C348, and E355 each contribute to the [4Fe-4S] cluster site.

The protein belongs to the IspG family. It depends on [4Fe-4S] cluster as a cofactor.

It catalyses the reaction (2E)-4-hydroxy-3-methylbut-2-enyl diphosphate + 2 oxidized [2Fe-2S]-[ferredoxin] + H2O = 2-C-methyl-D-erythritol 2,4-cyclic diphosphate + 2 reduced [2Fe-2S]-[ferredoxin] + H(+). It functions in the pathway isoprenoid biosynthesis; isopentenyl diphosphate biosynthesis via DXP pathway; isopentenyl diphosphate from 1-deoxy-D-xylulose 5-phosphate: step 5/6. Its function is as follows. Converts 2C-methyl-D-erythritol 2,4-cyclodiphosphate (ME-2,4cPP) into 1-hydroxy-2-methyl-2-(E)-butenyl 4-diphosphate. This Prochlorococcus marinus (strain MIT 9313) protein is 4-hydroxy-3-methylbut-2-en-1-yl diphosphate synthase (ferredoxin).